We begin with the raw amino-acid sequence, 190 residues long: Xanthine phosphoribosyltransferase (190 aa).

Xanthine contacts are provided by Leu20 and Asn27. Residue 129 to 133 (ANGRA) coordinates 5-phospho-alpha-D-ribose 1-diphosphate. Xanthine is bound at residue Lys157.

It belongs to the purine/pyrimidine phosphoribosyltransferase family. Xpt subfamily. In terms of assembly, homodimer.

The protein resides in the cytoplasm. The enzyme catalyses XMP + diphosphate = xanthine + 5-phospho-alpha-D-ribose 1-diphosphate. It participates in purine metabolism; XMP biosynthesis via salvage pathway; XMP from xanthine: step 1/1. Its function is as follows. Converts the preformed base xanthine, a product of nucleic acid breakdown, to xanthosine 5'-monophosphate (XMP), so it can be reused for RNA or DNA synthesis. The protein is Xanthine phosphoribosyltransferase of Clostridioides difficile (strain 630) (Peptoclostridium difficile).